We begin with the raw amino-acid sequence, 542 residues long: Chaperonin GroEL (542 aa).

ATP-binding positions include 29–32, 86–90, Gly413, 476–478, and Asp492; these read TLGP, DGTTT, and NAA. A disordered region spans residues 521-542; that stretch reads QPDENGPAAGPDMGMGGMGGMM. Over residues 533–542 the composition is skewed to gly residues; that stretch reads MGMGGMGGMM.

This sequence belongs to the chaperonin (HSP60) family. As to quaternary structure, forms a cylinder of 14 subunits composed of two heptameric rings stacked back-to-back. Interacts with the co-chaperonin GroES.

The protein resides in the cytoplasm. The catalysed reaction is ATP + H2O + a folded polypeptide = ADP + phosphate + an unfolded polypeptide.. Together with its co-chaperonin GroES, plays an essential role in assisting protein folding. The GroEL-GroES system forms a nano-cage that allows encapsulation of the non-native substrate proteins and provides a physical environment optimized to promote and accelerate protein folding. This Listeria innocua serovar 6a (strain ATCC BAA-680 / CLIP 11262) protein is Chaperonin GroEL.